A 134-amino-acid polypeptide reads, in one-letter code: Profilin-2 (134 aa).

The cysteines at positions 13 and 118 are disulfide-linked. An Involved in PIP2 interaction motif is present at residues 84–100 (AVTRGKKGTGGITIKKT). T114 carries the post-translational modification Phosphothreonine.

Belongs to the profilin family. Occurs in many kinds of cells as a complex with monomeric actin in a 1:1 ratio. In terms of processing, phosphorylated by MAP kinases.

It is found in the cytoplasm. The protein resides in the cytoskeleton. Functionally, binds to actin and affects the structure of the cytoskeleton. At high concentrations, profilin prevents the polymerization of actin, whereas it enhances it at low concentrations. In Olea europaea (Common olive), this protein is Profilin-2.